A 370-amino-acid polypeptide reads, in one-letter code: Asporin (370 aa).

Residues 1–15 (MKVYVLLVFLTLCSA) form the signal peptide. O-linked (GalNAc...) serine glycosylation occurs at S45. An LRRNT domain is found at 56–92 (FFPFDLFSTCPFGCQCYSRVVHCSDLGLSSVPSNIPF). 2 disulfides stabilise this stretch: C65-C71 and C69-C78. LRR repeat units lie at residues 93–114 (DTRM…DFKG), 117–138 (SLYA…AFLT), 141–163 (KLRR…PKSL), 164–183 (AELR…TFKG), 186–209 (ALHV…AFEG), 232–253 (TLLE…DFKR), 256–277 (DLQR…SLAN), 280–302 (RVRE…QELK), 303–324 (YLQI…DFCP), 332–354 (SLYS…PATF), and 355–370 (RCVL…NFRK). N272 is a glycosylation site (N-linked (GlcNAc...) asparagine). An intrachain disulfide couples C323 to C356.

The protein belongs to the small leucine-rich proteoglycan (SLRP) family. SLRP class I subfamily.

It localises to the secreted. The protein resides in the extracellular space. The protein localises to the extracellular matrix. This chain is Asporin (ASPN), found in Bos taurus (Bovine).